Reading from the N-terminus, the 213-residue chain is tRNA (guanine-N(7)-)-methyltransferase (213 aa).

Residues glutamate 44, glutamate 69, asparagine 96, and aspartate 118 each contribute to the S-adenosyl-L-methionine site. The active site involves aspartate 118. Lysine 122 provides a ligand contact to substrate. The segment at 124 to 129 (RHEKRR) is interaction with RNA. Substrate is bound by residues aspartate 154 and 191–194 (TEYE).

This sequence belongs to the class I-like SAM-binding methyltransferase superfamily. TrmB family.

It carries out the reaction guanosine(46) in tRNA + S-adenosyl-L-methionine = N(7)-methylguanosine(46) in tRNA + S-adenosyl-L-homocysteine. It participates in tRNA modification; N(7)-methylguanine-tRNA biosynthesis. In terms of biological role, catalyzes the formation of N(7)-methylguanine at position 46 (m7G46) in tRNA. The sequence is that of tRNA (guanine-N(7)-)-methyltransferase from Bacillus licheniformis (strain ATCC 14580 / DSM 13 / JCM 2505 / CCUG 7422 / NBRC 12200 / NCIMB 9375 / NCTC 10341 / NRRL NRS-1264 / Gibson 46).